The following is a 484-amino-acid chain: Probable cytochrome P450 508A1 (484 aa).

The chain crosses the membrane as a helical span at residues 1-21 (MALFEIIISLFVVYIIHNAIS). Cys-428 is a heme binding site.

Belongs to the cytochrome P450 family. Heme serves as cofactor.

It is found in the membrane. This is Probable cytochrome P450 508A1 (cyp508A1-1) from Dictyostelium discoideum (Social amoeba).